Reading from the N-terminus, the 351-residue chain is High-affinity nickel transport protein (351 aa).

Residues 1–19 (MFQLLAGVRMNSTGRPRAK) are Cytoplasmic-facing. The helical transmembrane segment at 20 to 40 (IILLYALLIAFNIGAWLCALA) threads the bilayer. At 41–51 (AFRDHPVLLGT) the chain is on the periplasmic side. A helical transmembrane segment spans residues 52-72 (ALLAYGLGLRHAVDADHLAAI). The Cytoplasmic segment spans residues 73-94 (DNVTRKLMQDGRRPITAGLWFS). The helical transmembrane segment at 95-115 (LGHSSVVVLASVLIAVMATTL) threads the bilayer. Topologically, residues 116 to 128 (QERLDAFHEVGSV) are periplasmic. Residues 129 to 149 (IGTLASALFLFAIAAINLVIL) traverse the membrane as a helical segment. The Cytoplasmic segment spans residues 150–199 (RSAYRAFRRVRRGGIYVEEDFDLLFGNRGFLARIFRPLFRFITRSWHMYP). Residues 200 to 220 (LGMLFALGFDTATEVALLGIS) form a helical membrane-spanning segment. The Periplasmic segment spans residues 221 to 243 (TMEASRGVPIWSILVFPALFTAG). A helical transmembrane segment spans residues 244–264 (MALIDTIDSILMCGAYAWAYA). The Cytoplasmic segment spans residues 265–269 (KPVRK). A helical transmembrane segment spans residues 270 to 290 (LYYNMTITFVSAIVALIVGGI). At 291–316 (ETLGLLADKFMLKGVFWNAVGALNEN) the chain is on the periplasmic side. A helical transmembrane segment spans residues 317–337 (FCQLGFVIIGIFTVCWVVSIV). Topologically, residues 338-351 (VYRLRRYDDSEVRA) are cytoplasmic.

This sequence belongs to the NiCoT transporter (TC 2.A.52) family.

It localises to the cell inner membrane. Its function is as follows. High-affinity nickel transporter responsible for nickel uptake. Necessary for high levels of activity of hydrogenase and urease. Does not transport cobalt. This chain is High-affinity nickel transport protein (hoxN), found in Cupriavidus necator (strain ATCC 17699 / DSM 428 / KCTC 22496 / NCIMB 10442 / H16 / Stanier 337) (Ralstonia eutropha).